A 174-amino-acid chain; its full sequence is uncharacterized protein (174 aa).

This is an uncharacterized protein from Methanocaldococcus jannaschii (strain ATCC 43067 / DSM 2661 / JAL-1 / JCM 10045 / NBRC 100440) (Methanococcus jannaschii).